The chain runs to 525 residues: UPF0288 protein MM_0912 (525 aa).

It belongs to the UPF0288 family.

This Methanosarcina mazei (strain ATCC BAA-159 / DSM 3647 / Goe1 / Go1 / JCM 11833 / OCM 88) (Methanosarcina frisia) protein is UPF0288 protein MM_0912.